A 302-amino-acid polypeptide reads, in one-letter code: Probable proteasome inhibitor (302 aa).

At Ala2 the chain carries N-acetylalanine. 2 disordered regions span residues Leu151–Pro188 and Ala259–Ile302. The span at Ala259–Val269 shows a compositional bias: pro residues.

It belongs to the proteasome inhibitor PI31 family.

Its function is as follows. Could play an important role in control of proteasome function. Inhibits the hydrolysis of protein and peptide substrates by the 20S proteasome. The sequence is that of Probable proteasome inhibitor from Arabidopsis thaliana (Mouse-ear cress).